The following is a 124-amino-acid chain: Large ribosomal subunit protein uL18 (124 aa).

The protein belongs to the universal ribosomal protein uL18 family. In terms of assembly, part of the 50S ribosomal subunit; part of the 5S rRNA/L5/L18/L25 subcomplex. Contacts the 5S and 23S rRNAs.

Its function is as follows. This is one of the proteins that bind and probably mediate the attachment of the 5S RNA into the large ribosomal subunit, where it forms part of the central protuberance. The chain is Large ribosomal subunit protein uL18 from Caldicellulosiruptor saccharolyticus (strain ATCC 43494 / DSM 8903 / Tp8T 6331).